Consider the following 239-residue polypeptide: tRNA (guanine-N(1)-)-methyltransferase (239 aa).

Residues Gly-108 and Leu-127–Leu-132 each bind S-adenosyl-L-methionine.

It belongs to the RNA methyltransferase TrmD family. As to quaternary structure, homodimer.

The protein resides in the cytoplasm. It carries out the reaction guanosine(37) in tRNA + S-adenosyl-L-methionine = N(1)-methylguanosine(37) in tRNA + S-adenosyl-L-homocysteine + H(+). Specifically methylates guanosine-37 in various tRNAs. In Streptococcus pyogenes serotype M6 (strain ATCC BAA-946 / MGAS10394), this protein is tRNA (guanine-N(1)-)-methyltransferase.